Consider the following 464-residue polypeptide: 3-isopropylmalate dehydratase large subunit (464 aa).

Residues Cys-345, Cys-405, and Cys-408 each contribute to the [4Fe-4S] cluster site.

This sequence belongs to the aconitase/IPM isomerase family. LeuC type 1 subfamily. Heterodimer of LeuC and LeuD. [4Fe-4S] cluster is required as a cofactor.

The enzyme catalyses (2R,3S)-3-isopropylmalate = (2S)-2-isopropylmalate. The protein operates within amino-acid biosynthesis; L-leucine biosynthesis; L-leucine from 3-methyl-2-oxobutanoate: step 2/4. Functionally, catalyzes the isomerization between 2-isopropylmalate and 3-isopropylmalate, via the formation of 2-isopropylmaleate. The protein is 3-isopropylmalate dehydratase large subunit of Bacteroides fragilis (strain ATCC 25285 / DSM 2151 / CCUG 4856 / JCM 11019 / LMG 10263 / NCTC 9343 / Onslow / VPI 2553 / EN-2).